Here is a 1406-residue protein sequence, read N- to C-terminus: DNA-directed RNA polymerase subunit beta' (1406 aa).

Residues C70, C72, C85, and C88 each contribute to the Zn(2+) site. Mg(2+)-binding residues include D460, D462, and D464. Residues C814, C888, C895, and C898 each coordinate Zn(2+).

It belongs to the RNA polymerase beta' chain family. As to quaternary structure, the RNAP catalytic core consists of 2 alpha, 1 beta, 1 beta' and 1 omega subunit. When a sigma factor is associated with the core the holoenzyme is formed, which can initiate transcription. Mg(2+) serves as cofactor. It depends on Zn(2+) as a cofactor.

The catalysed reaction is RNA(n) + a ribonucleoside 5'-triphosphate = RNA(n+1) + diphosphate. Its function is as follows. DNA-dependent RNA polymerase catalyzes the transcription of DNA into RNA using the four ribonucleoside triphosphates as substrates. The protein is DNA-directed RNA polymerase subunit beta' of Yersinia pseudotuberculosis serotype O:1b (strain IP 31758).